The sequence spans 209 residues: Ribonuclease HII (209 aa).

The region spanning 19-209 (CIIVGVDEVG…LPGITKLYSK (191 aa)) is the RNase H type-2 domain. A divalent metal cation is bound by residues Asp25, Glu26, and Asp118.

Belongs to the RNase HII family. Mn(2+) serves as cofactor. It depends on Mg(2+) as a cofactor.

The protein localises to the cytoplasm. It carries out the reaction Endonucleolytic cleavage to 5'-phosphomonoester.. Functionally, endonuclease that specifically degrades the RNA of RNA-DNA hybrids. This is Ribonuclease HII from Ehrlichia canis (strain Jake).